Reading from the N-terminus, the 530-residue chain is Alpha-(1,3)-fucosyltransferase 4 (530 aa).

Disordered stretches follow at residues 1 to 48 (MRRL…RAVP) and 66 to 112 (HLGG…STPA). Residues 1–147 (MRRLWGAARK…GGRRGWRRGR (147 aa)) lie on the Cytoplasmic side of the membrane. A compositionally biased stretch (basic and acidic residues) spans 88–106 (ASGERQRRLEPQLQHESRC). The helical; Signal-anchor for type II membrane protein transmembrane segment at 148-172 (GLPWTVCVLAAAGLTCTALITYACW) threads the bilayer. The Lumenal portion of the chain corresponds to 173-530 (GQLPPLPWAS…IRNLASWFER (358 aa)). 2 N-linked (GlcNAc...) asparagine glycosylation sites follow: asparagine 216 and asparagine 315.

Belongs to the glycosyltransferase 10 family. Expressed at low levels in bone marrow-derived mesenchymal stem cells. As to expression, expressed in cord blood immature promyelocytes and in peripheral blood myeloid and lymphoid cell populations.

It localises to the golgi apparatus. The protein resides in the golgi stack membrane. It carries out the reaction a beta-D-galactosyl-(1-&gt;4)-N-acetyl-beta-D-glucosaminyl derivative + GDP-beta-L-fucose = a beta-D-galactosyl-(1-&gt;4)-[alpha-L-fucosyl-(1-&gt;3)]-N-acetyl-beta-D-glucosaminyl derivative + GDP + H(+). It catalyses the reaction an N-acetyl-alpha-neuraminyl-(2-&gt;3)-beta-D-galactosyl-(1-&gt;4)-N-acetyl-beta-D-glucosaminyl derivative + GDP-beta-L-fucose = an alpha-Neu5Ac-(2-&gt;3)-beta-D-Gal-(1-&gt;4)-[alpha-L-Fuc-(1-&gt;3)]-beta-D-GlcNAc derivative + GDP + H(+). The catalysed reaction is an alpha-Neu5Ac-(2-&gt;3)-beta-D-Gal-(1-&gt;4)-beta-D-GlcNAc-(1-&gt;3)-beta-D-Gal-(1-&gt;4)-beta-D-GlcNAc derivative + GDP-beta-L-fucose = an alpha-Neu5Ac-(2-&gt;3)-beta-D-Gal-(1-&gt;4)-beta-D-GlcNAc-(1-&gt;3)-beta-D-Gal-(1-&gt;4)-[alpha-L-Fuc-(1-&gt;3)]-beta-D-GlcNAc derivative + GDP + H(+). The enzyme catalyses an alpha-Neu5Ac-(2-&gt;3)-beta-D-Gal-(1-&gt;4)-beta-D-GlcNAc6S derivative + GDP-beta-L-fucose = an alpha-Neu5Ac-(2-&gt;3)-beta-D-Gal-(1-&gt;4)-[alpha-L-Fuc-(1-&gt;3)]-beta-D-GlcNAc6S derivative + GDP + H(+). Its pathway is protein modification; protein glycosylation. Its function is as follows. Catalyzes alpha(1-&gt;3) linkage of fucosyl moiety transferred from GDP-beta-L-fucose to N-acetyl glucosamine (GlcNAc) within type 2 lactosamine (LacNAc, Gal-beta(1-&gt;4)GlcNAc) glycan attached to N- or O-linked glycoproteins. Robustly fucosylates nonsialylated distal LacNAc unit of the polylactosamine chain to form Lewis X antigen (CD15), a glycan determinant known to mediate important cellular functions in development and immunity. Fucosylates with lower efficiency sialylated LacNAc acceptors to form sialyl Lewis X and 6-sulfo sialyl Lewis X determinants that serve as recognition epitopes for C-type lectins. Together with FUT7 contributes to SELE, SELL and SELP selectin ligand biosynthesis and selectin-dependent lymphocyte homing, leukocyte migration and blood leukocyte homeostasis. In a cell type specific manner, may also fucosylate the internal LacNAc unit of the polylactosamine chain to form VIM-2 antigen that serves as recognition epitope for SELE. Functionally, does not generate Lewis X antigens. The protein is Alpha-(1,3)-fucosyltransferase 4 of Homo sapiens (Human).